The sequence spans 38 residues: Cytochrome b6-f complex subunit 5 (38 aa).

Residues 5 to 25 (LLLGIVLGLIPITLAGLFVAA) traverse the membrane as a helical segment.

This sequence belongs to the PetG family. In terms of assembly, the 4 large subunits of the cytochrome b6-f complex are cytochrome b6, subunit IV (17 kDa polypeptide, PetD), cytochrome f and the Rieske protein, while the 4 small subunits are PetG, PetL, PetM and PetN. The complex functions as a dimer.

It localises to the cellular thylakoid membrane. Its function is as follows. Component of the cytochrome b6-f complex, which mediates electron transfer between photosystem II (PSII) and photosystem I (PSI), cyclic electron flow around PSI, and state transitions. PetG is required for either the stability or assembly of the cytochrome b6-f complex. The chain is Cytochrome b6-f complex subunit 5 from Rippkaea orientalis (strain PCC 8801 / RF-1) (Cyanothece sp. (strain PCC 8801)).